We begin with the raw amino-acid sequence, 197 residues long: UPF0215 protein MK0057 (197 aa).

Belongs to the UPF0215 family.

The chain is UPF0215 protein MK0057 from Methanopyrus kandleri (strain AV19 / DSM 6324 / JCM 9639 / NBRC 100938).